Here is a 569-residue protein sequence, read N- to C-terminus: Thiol:disulfide interchange protein DsbD (569 aa).

The first 19 residues, 1 to 19, serve as a signal peptide directing secretion; sequence MAQRILTLILLLCSTSAFA. Intrachain disulfides connect Cys122–Cys128 and Cys187–Cys309. 7 helical membrane-spanning segments follow: residues 168–188, 213–233, 248–268, 301–321, 328–348, 362–382, and 391–411; these read LPFSALWALLIGIGIAFTPCV, LLTFIYVQGMALTYTALGLVV, YVLIGLALVFTLLALSMFGLF, IAGLICSPCTTAPLSAILLYI, WLGGGTLYLYALGMGLPLILI, WMEHVKTAFGFVILALPVFLL, and GLRLWSLLGVAFFGWAFITSL. In terms of domain architecture, Thioredoxin spans 430-569; it reads LVSVRPLQDW…FSAHLRDRQP (140 aa). A disulfide bridge connects residues Cys484 and Cys487.

This sequence belongs to the thioredoxin family. DsbD subfamily.

It is found in the cell inner membrane. It carries out the reaction [protein]-dithiol + NAD(+) = [protein]-disulfide + NADH + H(+). It catalyses the reaction [protein]-dithiol + NADP(+) = [protein]-disulfide + NADPH + H(+). Its function is as follows. Required to facilitate the formation of correct disulfide bonds in some periplasmic proteins and for the assembly of the periplasmic c-type cytochromes. Acts by transferring electrons from cytoplasmic thioredoxin to the periplasm. This transfer involves a cascade of disulfide bond formation and reduction steps. The polypeptide is Thiol:disulfide interchange protein DsbD (Citrobacter koseri (strain ATCC BAA-895 / CDC 4225-83 / SGSC4696)).